The following is a 542-amino-acid chain: Probable quinate permease (542 aa).

At 1 to 22 (MSILALVEDRPTPKEVYNWRIY) the chain is on the cytoplasmic side. The helical transmembrane segment at 23 to 43 (LLAAVASFTSCMIGYDSAFIG) threads the bilayer. Over 44 to 66 (TTLALSSFREEFGFNTMSKTAVN) the chain is Extracellular. The helical transmembrane segment at 67–87 (LVSANIVSCYQAGAFFGAFLA) threads the bilayer. Topologically, residues 88–97 (YPVGHFWGRK) are cytoplasmic. A helical transmembrane segment spans residues 98–118 (WGLLFSGAIFTLGAGLMLGAD). Over 119–130 (GDRGLGLLYGGR) the chain is Extracellular. A helical membrane pass occupies residues 131–151 (VLAGLGVGAGSNITPIYISEM). Residues 152-159 (APPSIRGR) are Cytoplasmic-facing. Residues 160–180 (LVGVYELGWQIGGLVGFWINY) form a helical membrane-spanning segment. The Extracellular segment spans residues 181–193 (GVSETLAPSHKQW). Residues 194-214 (IIPFAVQLIPSGLLLIGAVFL) form a helical membrane-spanning segment. At 215 to 285 (KESPRWLFSR…AGTNKKVMYR (71 aa)) the chain is on the cytoplasmic side. A helical membrane pass occupies residues 286–306 (LFLGSMLFFWQNGSGINAINY). Residues 307–325 (YSPTVFKSIGLQGANTSMF) lie on the Extracellular side of the membrane. Residues 326–346 (STGIFGVVKTVVTFVWLLYLI) traverse the membrane as a helical segment. The Cytoplasmic portion of the chain corresponds to 347 to 352 (DRLGRR). A helical membrane pass occupies residues 353-373 (LLLLIGAAGASVCLFIVGAYI). The Extracellular portion of the chain corresponds to 374-387 (KIADPASNPTQEMT). A helical membrane pass occupies residues 388–408 (GGGIAAMFFFYLYTVFYTPSW). Over 409 to 456 (NGTPWVMNSEMFEPNMRSLAQACAAASNWFWNFLISRFTPQMFAKMEY) the chain is Cytoplasmic. Residues 457–477 (GVWFFFASLMVLSIVFVFFLL) traverse the membrane as a helical segment. Over 478 to 542 (PETKGIPLES…EHLSEDLPKV (65 aa)) the chain is Extracellular. The disordered stretch occupies residues 519 to 542 (IEESGYSKTGDQQVEHLSEDLPKV). Over residues 531 to 542 (QVEHLSEDLPKV) the composition is skewed to basic and acidic residues.

It belongs to the major facilitator superfamily. Sugar transporter (TC 2.A.1.1) family. In terms of assembly, interacts with creB. In terms of processing, ubiquitinated. Deubiquitinated by creB, probably to control its activity or amount.

It localises to the cell membrane. Integral membrane transporter that imports quinic acid to be catabolized as a carbon source. The sequence is that of Probable quinate permease (qutD) from Neosartorya fischeri (strain ATCC 1020 / DSM 3700 / CBS 544.65 / FGSC A1164 / JCM 1740 / NRRL 181 / WB 181) (Aspergillus fischerianus).